The primary structure comprises 364 residues: tRNA N6-adenosine threonylcarbamoyltransferase (364 aa).

Residues histidine 115 and histidine 119 each contribute to the Fe cation site. Substrate is bound by residues 137 to 141 (LVSGG), aspartate 170, glycine 183, and asparagine 288. Aspartate 316 lines the Fe cation pocket.

It belongs to the KAE1 / TsaD family. Fe(2+) serves as cofactor.

Its subcellular location is the cytoplasm. The enzyme catalyses L-threonylcarbamoyladenylate + adenosine(37) in tRNA = N(6)-L-threonylcarbamoyladenosine(37) in tRNA + AMP + H(+). In terms of biological role, required for the formation of a threonylcarbamoyl group on adenosine at position 37 (t(6)A37) in tRNAs that read codons beginning with adenine. Is involved in the transfer of the threonylcarbamoyl moiety of threonylcarbamoyl-AMP (TC-AMP) to the N6 group of A37, together with TsaE and TsaB. TsaD likely plays a direct catalytic role in this reaction. The polypeptide is tRNA N6-adenosine threonylcarbamoyltransferase (Bartonella tribocorum (strain CIP 105476 / IBS 506)).